A 459-amino-acid chain; its full sequence is UDP-N-acetylmuramoyl-tripeptide--D-alanyl-D-alanine ligase (459 aa).

121 to 127 (GSSGKTT) is an ATP binding site.

Belongs to the MurCDEF family. MurF subfamily.

It is found in the cytoplasm. The catalysed reaction is D-alanyl-D-alanine + UDP-N-acetyl-alpha-D-muramoyl-L-alanyl-gamma-D-glutamyl-meso-2,6-diaminopimelate + ATP = UDP-N-acetyl-alpha-D-muramoyl-L-alanyl-gamma-D-glutamyl-meso-2,6-diaminopimeloyl-D-alanyl-D-alanine + ADP + phosphate + H(+). Its pathway is cell wall biogenesis; peptidoglycan biosynthesis. Functionally, involved in cell wall formation. Catalyzes the final step in the synthesis of UDP-N-acetylmuramoyl-pentapeptide, the precursor of murein. The protein is UDP-N-acetylmuramoyl-tripeptide--D-alanyl-D-alanine ligase of Treponema pallidum (strain Nichols).